The primary structure comprises 215 residues: Probable transaldolase (215 aa).

K83 functions as the Schiff-base intermediate with substrate in the catalytic mechanism.

The protein belongs to the transaldolase family. Type 3B subfamily.

Its subcellular location is the cytoplasm. The enzyme catalyses D-sedoheptulose 7-phosphate + D-glyceraldehyde 3-phosphate = D-erythrose 4-phosphate + beta-D-fructose 6-phosphate. The protein operates within carbohydrate degradation; pentose phosphate pathway; D-glyceraldehyde 3-phosphate and beta-D-fructose 6-phosphate from D-ribose 5-phosphate and D-xylulose 5-phosphate (non-oxidative stage): step 2/3. Its function is as follows. Transaldolase is important for the balance of metabolites in the pentose-phosphate pathway. In Desulforapulum autotrophicum (strain ATCC 43914 / DSM 3382 / VKM B-1955 / HRM2) (Desulfobacterium autotrophicum), this protein is Probable transaldolase.